The primary structure comprises 240 residues: 3-dehydroquinate dehydratase (240 aa).

3-dehydroquinate contacts are provided by residues Ser15, 42–44, and Arg73; that span reads EWR. Residue His132 is the Proton donor/acceptor of the active site. Lys160 acts as the Schiff-base intermediate with substrate in catalysis. 3 residues coordinate 3-dehydroquinate: Arg202, Ser221, and Gln225.

It belongs to the type-I 3-dehydroquinase family. As to quaternary structure, homodimer.

It carries out the reaction 3-dehydroquinate = 3-dehydroshikimate + H2O. It functions in the pathway metabolic intermediate biosynthesis; chorismate biosynthesis; chorismate from D-erythrose 4-phosphate and phosphoenolpyruvate: step 3/7. Involved in the third step of the chorismate pathway, which leads to the biosynthesis of aromatic amino acids. Catalyzes the cis-dehydration of 3-dehydroquinate (DHQ) and introduces the first double bond of the aromatic ring to yield 3-dehydroshikimate. The sequence is that of 3-dehydroquinate dehydratase from Latilactobacillus sakei subsp. sakei (strain 23K) (Lactobacillus sakei subsp. sakei).